A 118-amino-acid chain; its full sequence is Large ribosomal subunit protein uL24 (118 aa).

The protein belongs to the universal ribosomal protein uL24 family. In terms of assembly, part of the 50S ribosomal subunit.

In terms of biological role, one of two assembly initiator proteins, it binds directly to the 5'-end of the 23S rRNA, where it nucleates assembly of the 50S subunit. Functionally, one of the proteins that surrounds the polypeptide exit tunnel on the outside of the subunit. This chain is Large ribosomal subunit protein uL24, found in Prochlorococcus marinus (strain MIT 9301).